We begin with the raw amino-acid sequence, 298 residues long: Nucleotide-binding protein GK3066 (298 aa).

17–24 contacts ATP; sequence GMSGAGKT. 68 to 71 provides a ligand contact to GTP; that stretch reads DLRS.

This sequence belongs to the RapZ-like family.

Displays ATPase and GTPase activities. This chain is Nucleotide-binding protein GK3066, found in Geobacillus kaustophilus (strain HTA426).